A 140-amino-acid chain; its full sequence is Ribonuclease P protein component (140 aa).

This sequence belongs to the RnpA family. Consists of a catalytic RNA component (M1 or rnpB) and a protein subunit.

It catalyses the reaction Endonucleolytic cleavage of RNA, removing 5'-extranucleotides from tRNA precursor.. Functionally, RNaseP catalyzes the removal of the 5'-leader sequence from pre-tRNA to produce the mature 5'-terminus. It can also cleave other RNA substrates such as 4.5S RNA. The protein component plays an auxiliary but essential role in vivo by binding to the 5'-leader sequence and broadening the substrate specificity of the ribozyme. The protein is Ribonuclease P protein component of Nostoc sp. (strain PCC 7120 / SAG 25.82 / UTEX 2576).